The chain runs to 128 residues: Large ribosomal subunit protein uL22 (128 aa).

The protein belongs to the universal ribosomal protein uL22 family. As to quaternary structure, part of the 50S ribosomal subunit.

Functionally, this protein binds specifically to 23S rRNA; its binding is stimulated by other ribosomal proteins, e.g. L4, L17, and L20. It is important during the early stages of 50S assembly. It makes multiple contacts with different domains of the 23S rRNA in the assembled 50S subunit and ribosome. The globular domain of the protein is located near the polypeptide exit tunnel on the outside of the subunit, while an extended beta-hairpin is found that lines the wall of the exit tunnel in the center of the 70S ribosome. This is Large ribosomal subunit protein uL22 from Prochlorococcus marinus (strain MIT 9515).